The sequence spans 501 residues: Pyruvate kinase (501 aa).

A substrate-binding site is contributed by Arg-50. K(+)-binding residues include Asn-52, Ser-54, Asp-85, and Thr-86. Residue 52-55 participates in ATP binding; it reads NFSH. ATP contacts are provided by Arg-92 and Lys-178. Position 243 (Glu-243) interacts with Mg(2+). Substrate-binding residues include Gly-266, Asp-267, and Thr-299. Asp-267 is a Mg(2+) binding site.

It belongs to the pyruvate kinase family. In terms of assembly, homotetramer. Requires Mg(2+) as cofactor. The cofactor is K(+).

It carries out the reaction pyruvate + ATP = phosphoenolpyruvate + ADP + H(+). The protein operates within carbohydrate degradation; glycolysis; pyruvate from D-glyceraldehyde 3-phosphate: step 5/5. This chain is Pyruvate kinase (PYK1), found in Naumovozyma castellii (Yeast).